Reading from the N-terminus, the 427-residue chain is Polyprenol-phosphate-mannose-dependent alpha-(1-2)-phosphatidylinositol mannoside mannosyltransferase (427 aa).

10 helical membrane passes run 18–38, 101–121, 143–163, 191–211, 218–238, 279–299, 308–328, 331–346, 351–371, and 386–406; these read LWCL…WRLF, ASVA…AIVL, WLAV…SSNF, LMLG…LYFL, AALT…VLAW, ERFA…IWAM, PTLA…VSWS, WVWM…LLGW, VALA…PIDL, and LAGM…GLTV.

It belongs to the glycosyltransferase 87 family.

It is found in the cell membrane. The protein operates within phospholipid metabolism; phosphatidylinositol metabolism. Responsible for the addition of alpha-(1-2) mannose branches to the linear mannan core on the biosynthetic pathway to mature lipoarabinomannan (LAM). The polypeptide is Polyprenol-phosphate-mannose-dependent alpha-(1-2)-phosphatidylinositol mannoside mannosyltransferase (Mycobacterium tuberculosis (strain ATCC 25618 / H37Rv)).